We begin with the raw amino-acid sequence, 88 residues long: Exodeoxyribonuclease 7 small subunit (88 aa).

Positions 69 to 88 (ALAEEADPEDGASGADGGGA) are disordered.

The protein belongs to the XseB family. In terms of assembly, heterooligomer composed of large and small subunits.

It localises to the cytoplasm. The enzyme catalyses Exonucleolytic cleavage in either 5'- to 3'- or 3'- to 5'-direction to yield nucleoside 5'-phosphates.. Functionally, bidirectionally degrades single-stranded DNA into large acid-insoluble oligonucleotides, which are then degraded further into small acid-soluble oligonucleotides. The polypeptide is Exodeoxyribonuclease 7 small subunit (Streptomyces coelicolor (strain ATCC BAA-471 / A3(2) / M145)).